Consider the following 713-residue polypeptide: MLCVGRLGGLGARAAALPPRRAGRGILEAGIRARRVSTSWSPVGAAFNVKPQGSRLDLFGERRGLFGVPELSAPEGFHAAQEKALRKAELLVGRACSTPPGPQTVLIFDELSDSLCRVADLADFVKIAHPEPAFREAAEEACRSIGTMVEKLNTNVDLYQSLRKLLADKKLVDSLDPETRRVAELFMFDFEISGIHLDKEKRKRAVDLNVKILDLSSTFLMGANFPNKIEKHLLPEHIRRNFTSAGDHIIIDGLHAESPDDLVREAAYKIFLYPNAGQLKCLEELLSSRDLLAKLVGYSTFSHRALQGTIAKNPETVMQFLEKLSDKLSERTLKDFEMIRGMKMKLNPQNSEVMPWDPPYYSGVIRAERYNIEPSLYCPFFSLGACMEGLNILLNRLLGISLYAEQPAKGEVWSEDVRKLAVVHESEGLLGYIYCDFFQRADKPHQDCHFTIRGGRLKEDGDYQLPVVVLMLNLPRSSRSSPTLLTPGMMENLFHEMGHAMHSMLGRTRYQHVTGTRCPTDFAEVPSILMEYFANDYRVVNQFARHYQTGQPLPKNMVSRLCESKKVCAAADMQLQVFYATLDQIYHGKHPLRNSTTDILKETQEKFYGLPYVPDTAWQLRFSHLVGYGAKYYSYLMSRAVASMVWKECFLQDPFNRAAGERYRREMLAHGGGREPMLMVEGMLQKCPSVDDFVSALVSDLDLDFETFLMDSE.

A mitochondrion-targeting transit peptide spans 1–35; it reads MLCVGRLGGLGARAAALPPRRAGRGILEAGIRARR. Lys126 bears the N6-acetyllysine mark. His495 is a Zn(2+) binding site. The active site involves Glu496. Zn(2+) is bound by residues His499 and His502.

The protein belongs to the peptidase M3 family. As to quaternary structure, monomer. Requires Zn(2+) as cofactor.

It is found in the mitochondrion matrix. The enzyme catalyses Release of an N-terminal octapeptide as second stage of processing of some proteins imported into the mitochondrion.. Activity is divalent cation-dependent. It is stimulated by manganese, magnesium or calcium ions and reversibly inhibited by zinc, cobalt and iron. In terms of biological role, cleaves proteins, imported into the mitochondrion, to their mature size. The sequence is that of Mitochondrial intermediate peptidase (MIPEP) from Pongo abelii (Sumatran orangutan).